We begin with the raw amino-acid sequence, 292 residues long: Malonyl-[acyl-carrier protein] O-methyltransferase (292 aa).

Belongs to the methyltransferase superfamily.

It carries out the reaction malonyl-[ACP] + S-adenosyl-L-methionine = malonyl-[ACP] methyl ester + S-adenosyl-L-homocysteine. It functions in the pathway cofactor biosynthesis; biotin biosynthesis. Converts the free carboxyl group of a malonyl-thioester to its methyl ester by transfer of a methyl group from S-adenosyl-L-methionine (SAM). It allows to synthesize pimeloyl-ACP via the fatty acid synthetic pathway. This chain is Malonyl-[acyl-carrier protein] O-methyltransferase, found in Alcanivorax borkumensis (strain ATCC 700651 / DSM 11573 / NCIMB 13689 / SK2).